Consider the following 230-residue polypeptide: Probable methylthioribulose-1-phosphate dehydratase (230 aa).

Residue cysteine 87 coordinates substrate. Residues histidine 105 and histidine 107 each contribute to the Zn(2+) site. Catalysis depends on glutamate 129, which acts as the Proton donor/acceptor. Position 185 (histidine 185) interacts with Zn(2+).

Belongs to the aldolase class II family. MtnB subfamily. Requires Zn(2+) as cofactor.

It is found in the cytoplasm. The enzyme catalyses 5-(methylsulfanyl)-D-ribulose 1-phosphate = 5-methylsulfanyl-2,3-dioxopentyl phosphate + H2O. It functions in the pathway amino-acid biosynthesis; L-methionine biosynthesis via salvage pathway; L-methionine from S-methyl-5-thio-alpha-D-ribose 1-phosphate: step 2/6. Functionally, catalyzes the dehydration of methylthioribulose-1-phosphate (MTRu-1-P) into 2,3-diketo-5-methylthiopentyl-1-phosphate (DK-MTP-1-P). The chain is Probable methylthioribulose-1-phosphate dehydratase from Drosophila pseudoobscura pseudoobscura (Fruit fly).